Reading from the N-terminus, the 195-residue chain is Peptidyl-tRNA hydrolase (195 aa).

A tRNA-binding site is contributed by Tyr-17. The Proton acceptor role is filled by His-22. Phe-68, Asn-70, and Asn-116 together coordinate tRNA.

Belongs to the PTH family. Monomer.

It localises to the cytoplasm. It carries out the reaction an N-acyl-L-alpha-aminoacyl-tRNA + H2O = an N-acyl-L-amino acid + a tRNA + H(+). Its function is as follows. Hydrolyzes ribosome-free peptidyl-tRNAs (with 1 or more amino acids incorporated), which drop off the ribosome during protein synthesis, or as a result of ribosome stalling. In terms of biological role, catalyzes the release of premature peptidyl moieties from peptidyl-tRNA molecules trapped in stalled 50S ribosomal subunits, and thus maintains levels of free tRNAs and 50S ribosomes. The sequence is that of Peptidyl-tRNA hydrolase from Pectobacterium carotovorum subsp. carotovorum (strain PC1).